A 158-amino-acid chain; its full sequence is Phosphopantetheine adenylyltransferase (158 aa).

T9 is a binding site for substrate. Residues 9–10 and H17 each bind ATP; that span reads TF. Substrate is bound by residues K41, L73, and R87. ATP contacts are provided by residues 88-90, E98, and 123-129; these read GVR and WSYVSST.

The protein belongs to the bacterial CoaD family. Homohexamer. Requires Mg(2+) as cofactor.

The protein localises to the cytoplasm. It carries out the reaction (R)-4'-phosphopantetheine + ATP + H(+) = 3'-dephospho-CoA + diphosphate. The protein operates within cofactor biosynthesis; coenzyme A biosynthesis; CoA from (R)-pantothenate: step 4/5. Functionally, reversibly transfers an adenylyl group from ATP to 4'-phosphopantetheine, yielding dephospho-CoA (dPCoA) and pyrophosphate. This is Phosphopantetheine adenylyltransferase from Histophilus somni (strain 129Pt) (Haemophilus somnus).